The chain runs to 878 residues: Alanine--tRNA ligase (878 aa).

H567, H571, C669, and H673 together coordinate Zn(2+).

This sequence belongs to the class-II aminoacyl-tRNA synthetase family. Zn(2+) is required as a cofactor.

It localises to the cytoplasm. It catalyses the reaction tRNA(Ala) + L-alanine + ATP = L-alanyl-tRNA(Ala) + AMP + diphosphate. Catalyzes the attachment of alanine to tRNA(Ala) in a two-step reaction: alanine is first activated by ATP to form Ala-AMP and then transferred to the acceptor end of tRNA(Ala). Also edits incorrectly charged Ser-tRNA(Ala) and Gly-tRNA(Ala) via its editing domain. This Rickettsia felis (strain ATCC VR-1525 / URRWXCal2) (Rickettsia azadi) protein is Alanine--tRNA ligase.